Here is a 541-residue protein sequence, read N- to C-terminus: GMP synthase [glutamine-hydrolyzing] (541 aa).

Positions 15 to 209 (TILTLDFGSQ…AVNICGCKQN (195 aa)) constitute a Glutamine amidotransferase type-1 domain. The active-site Nucleophile is Cys91. Active-site residues include His183 and Glu185. The region spanning 210–416 (WTMARFVDQE…LGIAHEMVMR (207 aa)) is the GMPS ATP-PPase domain. 238-244 (SGGVDST) is an ATP binding site. XMP contacts are provided by Arg311, Asp478, Lys533, and Glu539.

Homodimer. It depends on Mg(2+) as a cofactor.

Its subcellular location is the cytoplasm. It localises to the cytosol. The enzyme catalyses XMP + L-glutamine + ATP + H2O = GMP + L-glutamate + AMP + diphosphate + 2 H(+). Its pathway is purine metabolism; GMP biosynthesis; GMP from XMP (L-Gln route): step 1/1. Functionally, catalyzes the conversion of xanthine monophosphate (XMP) to GMP in the presence of glutamine and ATP through an adenyl-XMP intermediate. In Aspergillus oryzae (strain ATCC 42149 / RIB 40) (Yellow koji mold), this protein is GMP synthase [glutamine-hydrolyzing] (gua1).